Here is a 556-residue protein sequence, read N- to C-terminus: 2-succinyl-5-enolpyruvyl-6-hydroxy-3-cyclohexene-1-carboxylate synthase (556 aa).

It belongs to the TPP enzyme family. MenD subfamily. Homodimer. It depends on Mg(2+) as a cofactor. The cofactor is Mn(2+). Requires thiamine diphosphate as cofactor.

The catalysed reaction is isochorismate + 2-oxoglutarate + H(+) = 5-enolpyruvoyl-6-hydroxy-2-succinyl-cyclohex-3-ene-1-carboxylate + CO2. Its pathway is quinol/quinone metabolism; 1,4-dihydroxy-2-naphthoate biosynthesis; 1,4-dihydroxy-2-naphthoate from chorismate: step 2/7. It functions in the pathway quinol/quinone metabolism; menaquinone biosynthesis. In terms of biological role, catalyzes the thiamine diphosphate-dependent decarboxylation of 2-oxoglutarate and the subsequent addition of the resulting succinic semialdehyde-thiamine pyrophosphate anion to isochorismate to yield 2-succinyl-5-enolpyruvyl-6-hydroxy-3-cyclohexene-1-carboxylate (SEPHCHC). The protein is 2-succinyl-5-enolpyruvyl-6-hydroxy-3-cyclohexene-1-carboxylate synthase of Salmonella gallinarum (strain 287/91 / NCTC 13346).